The primary structure comprises 85 residues: Large ribosomal subunit protein bL27 (85 aa).

Residues 1-22 form a disordered region; that stretch reads MAHKKAGGSTRNGRDSESKRLG.

It belongs to the bacterial ribosomal protein bL27 family.

The chain is Large ribosomal subunit protein bL27 from Marinomonas sp. (strain MWYL1).